The sequence spans 644 residues: Leucine-rich repeat protein soc-2 homolog (644 aa).

Low complexity predominate over residues 1 to 19; sequence MNLCSSGATASTTSLSSTG. Disordered regions lie at residues 1–60 and 82–150; these read MNLC…APTL and NSPA…IQAD. Composition is skewed to gly residues over residues 26-50 and 87-96; these read GVPG…GGKA and GAGGASGFTG. The segment covering 99-117 has biased composition (polar residues); sequence QQPTGSNGHSHLHNENNAN. LRR repeat units follow at residues 164-185, 187-208, 210-231, 233-254, 256-277, 279-300, 302-323, 325-346, 348-370, 371-392, 395-416, 419-440, 443-464, 466-487, 489-510, 512-533, 535-556, 558-579, 581-603, and 605-626; these read GIKR…VKEC, HLTE…IGCL, SLRN…LQNC, QLKV…IYRL, SLTT…LRQL, NLTM…IGAL, NLTT…IGNC, NLSA…IGNL, SLVR…KNCK, SMDE…MLAS, GLTT…GPAQ, NVYS…IFSR, GLTK…IGTW, NMVE…IMNL, NLEI…IGNL, RLRI…IGLL, ELQR…IGHL, NLTH…IGSL, SLEN…LALC, and NLKY…IQAG.

This sequence belongs to the SHOC2 family.

Acts as a Ras effector and participates in MAPK pathway activation. Probably acts as a regulatory subunit of protein phosphatase that specifically dephosphorylates Raf kinase and stimulate Raf activity at specialized signaling complexes upon Ras activation. This Drosophila erecta (Fruit fly) protein is Leucine-rich repeat protein soc-2 homolog (Sur-8).